A 216-amino-acid chain; its full sequence is MISFIKGVLIEKDPTALLIDVNGIGYEVFVPMTTFYTLGDIDSQVSLYTHFVVREDAQQLYGFKSKVDKKVFQELIKVNGIGARTAIAILSGMDSKTLLHCIENKDYALLATVPGIGKKTAERLVVEIYDKLLKMANEIYAQTSGTTTTSQDSQAQQAPTSVVLANSIFNESVDALLALGYKQKDAEKMARSAMGDATTAAEVIRKALQGSIKSKG.

Residues 1–64 are domain I; that stretch reads MISFIKGVLI…EDAQQLYGFK (64 aa). The domain II stretch occupies residues 65–143; that stretch reads SKVDKKVFQE…KMANEIYAQT (79 aa). Residues 144–163 are flexible linker; sequence SGTTTTSQDSQAQQAPTSVV. A domain III region spans residues 164-216; sequence LANSIFNESVDALLALGYKQKDAEKMARSAMGDATTAAEVIRKALQGSIKSKG.

The protein belongs to the RuvA family. Homotetramer. Forms an RuvA(8)-RuvB(12)-Holliday junction (HJ) complex. HJ DNA is sandwiched between 2 RuvA tetramers; dsDNA enters through RuvA and exits via RuvB. An RuvB hexamer assembles on each DNA strand where it exits the tetramer. Each RuvB hexamer is contacted by two RuvA subunits (via domain III) on 2 adjacent RuvB subunits; this complex drives branch migration. In the full resolvosome a probable DNA-RuvA(4)-RuvB(12)-RuvC(2) complex forms which resolves the HJ.

The protein localises to the cytoplasm. Functionally, the RuvA-RuvB-RuvC complex processes Holliday junction (HJ) DNA during genetic recombination and DNA repair, while the RuvA-RuvB complex plays an important role in the rescue of blocked DNA replication forks via replication fork reversal (RFR). RuvA specifically binds to HJ cruciform DNA, conferring on it an open structure. The RuvB hexamer acts as an ATP-dependent pump, pulling dsDNA into and through the RuvAB complex. HJ branch migration allows RuvC to scan DNA until it finds its consensus sequence, where it cleaves and resolves the cruciform DNA. The sequence is that of Holliday junction branch migration complex subunit RuvA from Francisella tularensis subsp. holarctica (strain FTNF002-00 / FTA).